The primary structure comprises 224 residues: UPF0758 protein CV_3079 (224 aa).

Positions 102–224 (ALSSPQQVRD…AESFAERGWL (123 aa)) constitute an MPN domain. Positions 173, 175, and 186 each coordinate Zn(2+). The JAMM motif signature appears at 173-186 (HNHPSGVSEPSSAD).

Belongs to the UPF0758 family.

In Chromobacterium violaceum (strain ATCC 12472 / DSM 30191 / JCM 1249 / CCUG 213 / NBRC 12614 / NCIMB 9131 / NCTC 9757 / MK), this protein is UPF0758 protein CV_3079.